Here is a 478-residue protein sequence, read N- to C-terminus: Cytochrome c-552 (478 aa).

A signal peptide spans 1–26; it reads MARKTLRARRFFSLIFPFFFITSVYA. H94 is a heme c binding site. Residues C122, C125, and K126 each coordinate heme. Heme c-binding residues include C160, C163, H164, C209, C212, and H213. 4 residues coordinate Ca(2+): E215, Y216, K261, and Q263. Y216 serves as a coordination point for substrate. H264 is a substrate binding site. The heme c site is built by H275, C282, C285, H286, H301, C314, C317, H318, and H393.

It belongs to the cytochrome c-552 family. Requires Ca(2+) as cofactor. The cofactor is heme c.

The protein localises to the periplasm. The enzyme catalyses 6 Fe(III)-[cytochrome c] + NH4(+) + 2 H2O = 6 Fe(II)-[cytochrome c] + nitrite + 8 H(+). It participates in nitrogen metabolism; nitrate reduction (assimilation). Its function is as follows. Catalyzes the reduction of nitrite to ammonia, consuming six electrons in the process. This is Cytochrome c-552 from Salmonella schwarzengrund (strain CVM19633).